A 433-amino-acid chain; its full sequence is DNA polymerase processivity factor (433 aa).

The tract at residues 274–433 (RGDPFDKNYV…VPNTKKQKCG (160 aa)) is disordered. Positions 298-307 (SLSSLANAGG) are enriched in low complexity. Composition is skewed to gly residues over residues 325-336 (GLGGLGGGGGGG) and 344-359 (GGGGSGTRKMSSGGGG). Over residues 360–376 (GDHDHGLSSKEKYEQHK) the composition is skewed to basic and acidic residues. Over residues 385–398 (GGSGGGGGGGGGGL) the composition is skewed to gly residues.

The protein belongs to the herpesviridae polymerase accessory protein family. In terms of assembly, forms homodimers. Interacts with host SMARCB1. Interacts with host NCL/nucleolin; this interaction is important for the organization of proteins within viral replication compartments. Interacts with UL112/UL113; this interaction is necessary for efficient viral DNA replication. Interacts with UL84. Interacts with the uracil DNA glycosylase UL114. Interacts with the DNA polymerase catalytic subunit UL54. Interacts with host IRF3. Interacts with host RELA. Post-translationally, phosphorylated by UL97 on serine residues, phosphorylation seems important for UL44 nuclear entry but does not directly affect its role in replication. Sumoylated. Sumoylation on Lys-410 increases viral DNA replication.

It localises to the virion. It is found in the host nucleus. In terms of biological role, accessory subunit of the DNA polymerase that plays an essential role in viral DNA replication and acts by increasing the processivity of polymerization. Forms dimers that binds to double-stranded DNA and UL54 specifically to stimulates long chain DNA synthesis efficiently. Plays an important role in maintaining the structure of viral replication compartments by interacting with host nucleolin/NUC. In addition, suppresses innate immune responses through effects on host IRF3 and NF-kappa-B. Mechanistically, interfere with the binding of IRF3 and the p65 NF-kappa-B subunit to the promoters of antiviral genes, thereby inhibiting the expression of these genes. In Human cytomegalovirus (strain Merlin) (HHV-5), this protein is DNA polymerase processivity factor (UL44).